We begin with the raw amino-acid sequence, 481 residues long: tRNA-2-methylthio-N(6)-dimethylallyladenosine synthase (481 aa).

In terms of domain architecture, MTTase N-terminal spans Lys-24 to Glu-140. [4Fe-4S] cluster is bound by residues Cys-33, Cys-69, Cys-103, Cys-178, Cys-182, and Cys-185. One can recognise a Radical SAM core domain in the interval Met-164–Arg-411. The TRAM domain maps to Glu-413–Gly-476.

This sequence belongs to the methylthiotransferase family. MiaB subfamily. Monomer. [4Fe-4S] cluster is required as a cofactor.

It localises to the cytoplasm. The enzyme catalyses N(6)-dimethylallyladenosine(37) in tRNA + (sulfur carrier)-SH + AH2 + 2 S-adenosyl-L-methionine = 2-methylsulfanyl-N(6)-dimethylallyladenosine(37) in tRNA + (sulfur carrier)-H + 5'-deoxyadenosine + L-methionine + A + S-adenosyl-L-homocysteine + 2 H(+). Functionally, catalyzes the methylthiolation of N6-(dimethylallyl)adenosine (i(6)A), leading to the formation of 2-methylthio-N6-(dimethylallyl)adenosine (ms(2)i(6)A) at position 37 in tRNAs that read codons beginning with uridine. This chain is tRNA-2-methylthio-N(6)-dimethylallyladenosine synthase, found in Flavobacterium johnsoniae (strain ATCC 17061 / DSM 2064 / JCM 8514 / BCRC 14874 / CCUG 350202 / NBRC 14942 / NCIMB 11054 / UW101) (Cytophaga johnsonae).